Reading from the N-terminus, the 595-residue chain is Arginine--tRNA ligase (595 aa).

A 'HIGH' region motif is present at residues 132–142 (ANPTGPLHVGH).

The protein belongs to the class-I aminoacyl-tRNA synthetase family. As to quaternary structure, monomer.

The protein resides in the cytoplasm. The enzyme catalyses tRNA(Arg) + L-arginine + ATP = L-arginyl-tRNA(Arg) + AMP + diphosphate. The protein is Arginine--tRNA ligase of Cupriavidus pinatubonensis (strain JMP 134 / LMG 1197) (Cupriavidus necator (strain JMP 134)).